A 372-amino-acid polypeptide reads, in one-letter code: MKNLYEILEVNENATQEEIKKSYRRLAKKYHPDINSGDSEAENKFKEINGAYEVLGDKEKRKKYDMYGDRMFDQGTGGGFSDFGDIFGDFFGDIFGGFSSRSYSKNPNAPRKGSNIQVELEIDFEDSINGTKKEISYKKKVKCHVCNGDGAKPGTEKRQCEKCHGTGIINDTKRTPFGIFTQQSECDKCHGEGYVIDEKCENCKGKGYEIERKTINITIPKGINNGAIMSVKGEGNDGENNGSPGDLYVIIKIREHEFFKRINNDIVFDMPITYAQAVLGSKIEVPTLDGIEEFELPEGTQPNTTFKLKSKGVPYLNSNSRGDILFTVKIIVPKKINKEQKEKLIKFSESMNQELNVNEKKSIFDRIKDMFE.

Residues 3–68 enclose the J domain; that stretch reads NLYEILEVNE…EKRKKYDMYG (66 aa). Residues 130–212 form a CR-type zinc finger; sequence GTKKEISYKK…CKGKGYEIER (83 aa). Residues C143, C146, C160, C163, C186, C189, C200, and C203 each contribute to the Zn(2+) site. CXXCXGXG motif repeat units lie at residues 143 to 150, 160 to 167, 186 to 193, and 200 to 207; these read CHVCNGDG, CEKCHGTG, CDKCHGEG, and CENCKGKG.

Belongs to the DnaJ family. In terms of assembly, homodimer. The cofactor is Zn(2+).

The protein localises to the cytoplasm. In terms of biological role, participates actively in the response to hyperosmotic and heat shock by preventing the aggregation of stress-denatured proteins and by disaggregating proteins, also in an autonomous, DnaK-independent fashion. Unfolded proteins bind initially to DnaJ; upon interaction with the DnaJ-bound protein, DnaK hydrolyzes its bound ATP, resulting in the formation of a stable complex. GrpE releases ADP from DnaK; ATP binding to DnaK triggers the release of the substrate protein, thus completing the reaction cycle. Several rounds of ATP-dependent interactions between DnaJ, DnaK and GrpE are required for fully efficient folding. Also involved, together with DnaK and GrpE, in the DNA replication of plasmids through activation of initiation proteins. The protein is Chaperone protein DnaJ of Finegoldia magna (strain ATCC 29328 / DSM 20472 / WAL 2508) (Peptostreptococcus magnus).